The primary structure comprises 287 residues: Nucleotide-binding protein Asuc_0930 (287 aa).

8-15 (GRSGAGKS) lines the ATP pocket. Position 56–59 (56–59 (DIRN)) interacts with GTP.

The protein belongs to the RapZ-like family.

In terms of biological role, displays ATPase and GTPase activities. The polypeptide is Nucleotide-binding protein Asuc_0930 (Actinobacillus succinogenes (strain ATCC 55618 / DSM 22257 / CCUG 43843 / 130Z)).